Consider the following 471-residue polypeptide: Glutamate--tRNA ligase (471 aa).

Positions 9 to 19 match the 'HIGH' region motif; sequence PSPTGYLHVGG. Zn(2+) contacts are provided by Cys-98, Cys-100, Cys-125, and His-127. The 'KMSKS' region motif lies at 237-241; the sequence is KLSKR. Residue Lys-240 coordinates ATP.

The protein belongs to the class-I aminoacyl-tRNA synthetase family. Glutamate--tRNA ligase type 1 subfamily. Monomer. Requires Zn(2+) as cofactor.

The protein localises to the cytoplasm. It catalyses the reaction tRNA(Glu) + L-glutamate + ATP = L-glutamyl-tRNA(Glu) + AMP + diphosphate. Catalyzes the attachment of glutamate to tRNA(Glu) in a two-step reaction: glutamate is first activated by ATP to form Glu-AMP and then transferred to the acceptor end of tRNA(Glu). The sequence is that of Glutamate--tRNA ligase from Shigella boydii serotype 4 (strain Sb227).